Here is a 325-residue protein sequence, read N- to C-terminus: Hexaprenyl-diphosphate synthase large subunit ((2E,6E)-farnesyl-diphosphate specific) (325 aa).

Lysine 45, arginine 48, and histidine 77 together coordinate isopentenyl diphosphate. Residues aspartate 84, aspartate 88, and arginine 93 each contribute to the all-trans-hexaprenyl diphosphate site. Residues aspartate 84 and aspartate 88 each contribute to the Mg(2+) site. An isopentenyl diphosphate-binding site is contributed by arginine 94. Residues lysine 170, threonine 171, and glutamine 208 each contribute to the all-trans-hexaprenyl diphosphate site.

This sequence belongs to the FPP/GGPP synthase family. In terms of assembly, dimer of heterodimer or heterotetramer composed of a small (Hexs-a) and large (Hexs-B) subunit. Mg(2+) is required as a cofactor.

It carries out the reaction 3 isopentenyl diphosphate + (2E,6E)-farnesyl diphosphate = all-trans-hexaprenyl diphosphate + 3 diphosphate. Functionally, catalyzes the condensation of three molecules of isopentenyl diphosphate with farnesyl diphosphate (FPP) to yield (all-E)-hexaprenyl diphosphate (HexPP; C30), the precursor of the prenyl side chain of menaquinone-6. Large subunit Hexs-B catalyzes the condensation reaction and the final product chain length is cooperatively regulated by both the Hexs-A and Hexs-B subunits using the whole size of the hydrophobic cleft as a ruler. This Micrococcus luteus (Micrococcus lysodeikticus) protein is Hexaprenyl-diphosphate synthase large subunit ((2E,6E)-farnesyl-diphosphate specific) (hexs-b).